Consider the following 338-residue polypeptide: D-erythrose-4-phosphate dehydrogenase (338 aa).

Residue 11-12 (RI) participates in NAD(+) binding. Residues 153-155 (SCT), Arg199, 212-213 (TK), and Arg235 each bind substrate. Residue Cys154 is the Nucleophile of the active site. Asn317 provides a ligand contact to NAD(+).

This sequence belongs to the glyceraldehyde-3-phosphate dehydrogenase family. Epd subfamily. As to quaternary structure, homotetramer.

Its subcellular location is the cytoplasm. It catalyses the reaction D-erythrose 4-phosphate + NAD(+) + H2O = 4-phospho-D-erythronate + NADH + 2 H(+). It functions in the pathway cofactor biosynthesis; pyridoxine 5'-phosphate biosynthesis; pyridoxine 5'-phosphate from D-erythrose 4-phosphate: step 1/5. Its function is as follows. Catalyzes the NAD-dependent conversion of D-erythrose 4-phosphate to 4-phosphoerythronate. This Shewanella sp. (strain MR-4) protein is D-erythrose-4-phosphate dehydrogenase.